The following is a 251-amino-acid chain: Cell division protein ZapD (251 aa).

This sequence belongs to the ZapD family. As to quaternary structure, interacts with FtsZ.

It localises to the cytoplasm. Its function is as follows. Cell division factor that enhances FtsZ-ring assembly. Directly interacts with FtsZ and promotes bundling of FtsZ protofilaments, with a reduction in FtsZ GTPase activity. The sequence is that of Cell division protein ZapD from Burkholderia thailandensis (strain ATCC 700388 / DSM 13276 / CCUG 48851 / CIP 106301 / E264).